Reading from the N-terminus, the 2108-residue chain is Mycocerosic acid synthase-like polyketide synthase (2108 aa).

Positions 1-23 (MGKERTKTVDRTRVTPVAVIGMG) are cleaved as a signal peptide. Cys-24 carries the N-palmitoyl cysteine lipid modification. Cys-24 carries the S-diacylglycerol cysteine lipid modification. A Ketosynthase family 3 (KS3) domain is found at 24–436 (CRLPGGIDSP…GTNVHAIVEQ (413 aa)). Cys-185 acts as the Acyl-thioester intermediate; for beta-ketoacyl synthase activity in catalysis. Residues His-320 and His-356 each act as for beta-ketoacyl synthase activity in the active site. Positions 438 to 542 (PVPAPESGAP…PYPPAVGQDD (105 aa)) are linker domain (LD). An acyltransferase (AT) region spans residues 543 to 842 (RGPVWVFSGQ…AAALAGMRRE (300 aa)). Ser-634 (acyl-ester intermediate; for acyltransferase activity) is an active-site residue. A dehydratase (DH) region spans residues 900 to 1184 (NTVAVHPLLG…LAVRGLQLGT (285 aa)). The tract at residues 905 to 1025 (HPLLGSHVRL…AVLHVVREAD (121 aa)) is N-terminal hotdog fold. The region spanning 905–1191 (HPLLGSHVRL…LGTGASQASE (287 aa)) is the PKS/mFAS DH domain. Catalysis depends on His-938, which acts as the Proton acceptor; for dehydratase activity. The C-terminal hotdog fold stretch occupies residues 1044–1191 (PHKVDGAEVR…LGTGASQASE (148 aa)). Residue Asp-1108 is the Proton donor; for dehydratase activity of the active site. The pseudo beta-ketoacyl reductase (PsiKR) stretch occupies residues 1220-1391 (AWLLISTCDA…SGEDETAWRN (172 aa)). The interval 1419–1743 (AGMRLQIRTP…EHTGKLILDV (325 aa)) is enoylreductase (ER). Residues 1765-2004 (GSYIITGGLG…HSPFAEKFQS (240 aa)) are beta-ketoacyl reductase (KR). NADP(+)-binding positions include 1773 to 1776 (LGGL), 1796 to 1799 (SRSQ), 1824 to 1825 (DI), and 1897 to 1898 (FS). A Carrier domain is found at 2025–2101 (EEWPDRLRRL…DLMCDKLAAD (77 aa)). Ser-2060 carries the post-translational modification O-(pantetheine 4'-phosphoryl)serine.

Homodimer.

Its subcellular location is the cell membrane. The protein operates within lipid metabolism; fatty acid biosynthesis. Functionally, polyketide synthase likely involved in the biosynthesis of a polymethyl-branched fatty acid (PMB-FA) that might only be produced during host infection. Is required for the full virulence of M.tuberculosis during host infection. The sequence is that of Mycocerosic acid synthase-like polyketide synthase from Mycobacterium tuberculosis (strain ATCC 25618 / H37Rv).